Reading from the N-terminus, the 222-residue chain is tRNA (guanine-N(1)-)-methyltransferase (222 aa).

Residues G110 and 130–135 each bind S-adenosyl-L-methionine; that span reads IGDYVL.

The protein belongs to the RNA methyltransferase TrmD family. In terms of assembly, homodimer.

Its subcellular location is the cytoplasm. The enzyme catalyses guanosine(37) in tRNA + S-adenosyl-L-methionine = N(1)-methylguanosine(37) in tRNA + S-adenosyl-L-homocysteine + H(+). Functionally, specifically methylates guanosine-37 in various tRNAs. The chain is tRNA (guanine-N(1)-)-methyltransferase from Protochlamydia amoebophila (strain UWE25).